Here is a 434-residue protein sequence, read N- to C-terminus: Methylenetetrahydrofolate--tRNA-(uracil-5-)-methyltransferase TrmFO (434 aa).

10–15 contacts FAD; the sequence is GAGLAG.

It belongs to the MnmG family. TrmFO subfamily. The cofactor is FAD.

The protein localises to the cytoplasm. It carries out the reaction uridine(54) in tRNA + (6R)-5,10-methylene-5,6,7,8-tetrahydrofolate + NADH + H(+) = 5-methyluridine(54) in tRNA + (6S)-5,6,7,8-tetrahydrofolate + NAD(+). It catalyses the reaction uridine(54) in tRNA + (6R)-5,10-methylene-5,6,7,8-tetrahydrofolate + NADPH + H(+) = 5-methyluridine(54) in tRNA + (6S)-5,6,7,8-tetrahydrofolate + NADP(+). Catalyzes the folate-dependent formation of 5-methyl-uridine at position 54 (M-5-U54) in all tRNAs. The sequence is that of Methylenetetrahydrofolate--tRNA-(uracil-5-)-methyltransferase TrmFO from Bacillus cytotoxicus (strain DSM 22905 / CIP 110041 / 391-98 / NVH 391-98).